Consider the following 457-residue polypeptide: Elongation factor 1-alpha (457 aa).

Glycine 2 carries the post-translational modification N,N,N-trimethylglycine. An N6,N6-dimethyllysine; alternate modification is found at lysine 3. Lysine 3 bears the N6-methyllysine; alternate mark. Residues 5–240 enclose the tr-type G domain; that stretch reads KTHVNVVVIG…DAIEPPVRPS (236 aa). Residues 14 to 21 are G1; sequence GHVDSGKS. 14–21 serves as a coordination point for GTP; it reads GHVDSGKS. Lysine 30 is modified (N6-methyllysine). The tract at residues 70–74 is G2; sequence GITID. Residue lysine 79 is modified to N6,N6,N6-trimethyllysine. A G3 region spans residues 91 to 94; it reads DAPG. GTP is bound by residues 91 to 95 and 153 to 156; these read DAPGH and NKMD. Residues 153-156 form a G4 region; it reads NKMD. Residues 192-194 form a G5 region; that stretch reads SGW. Position 316 is an N6,N6-dimethyllysine; alternate (lysine 316). Lysine 316 is modified (N6-methyllysine; alternate). Position 389 is an N6-methyllysine (lysine 389).

This sequence belongs to the TRAFAC class translation factor GTPase superfamily. Classic translation factor GTPase family. EF-Tu/EF-1A subfamily.

The protein resides in the cytoplasm. This protein promotes the GTP-dependent binding of aminoacyl-tRNA to the A-site of ribosomes during protein biosynthesis. The sequence is that of Elongation factor 1-alpha (TEF-3) from Mucor circinelloides f. lusitanicus (Mucor racemosus var. lusitanicus).